The following is a 118-amino-acid chain: Large ribosomal subunit protein bL19 (118 aa).

This sequence belongs to the bacterial ribosomal protein bL19 family.

Functionally, this protein is located at the 30S-50S ribosomal subunit interface and may play a role in the structure and function of the aminoacyl-tRNA binding site. This chain is Large ribosomal subunit protein bL19, found in Metamycoplasma arthritidis (strain 158L3-1) (Mycoplasma arthritidis).